Here is a 36-residue protein sequence, read N- to C-terminus: Photosystem I reaction center subunit VIII (36 aa).

A helical transmembrane segment spans residues 8 to 28; it reads SFFVPLVCLVFPAIAMAFLFV.

This sequence belongs to the PsaI family.

It is found in the plastid. Its subcellular location is the chloroplast thylakoid membrane. Functionally, may help in the organization of the PsaL subunit. This chain is Photosystem I reaction center subunit VIII, found in Chara vulgaris (Common stonewort).